Reading from the N-terminus, the 194-residue chain is Peptidyl-tRNA hydrolase (194 aa).

TRNA is bound at residue Tyr17. His22 (proton acceptor) is an active-site residue. The tRNA site is built by Tyr68, Asn70, and Asn116.

Belongs to the PTH family. As to quaternary structure, monomer.

Its subcellular location is the cytoplasm. It catalyses the reaction an N-acyl-L-alpha-aminoacyl-tRNA + H2O = an N-acyl-L-amino acid + a tRNA + H(+). Its function is as follows. Hydrolyzes ribosome-free peptidyl-tRNAs (with 1 or more amino acids incorporated), which drop off the ribosome during protein synthesis, or as a result of ribosome stalling. In terms of biological role, catalyzes the release of premature peptidyl moieties from peptidyl-tRNA molecules trapped in stalled 50S ribosomal subunits, and thus maintains levels of free tRNAs and 50S ribosomes. In Pseudomonas putida (strain ATCC 700007 / DSM 6899 / JCM 31910 / BCRC 17059 / LMG 24140 / F1), this protein is Peptidyl-tRNA hydrolase.